The sequence spans 71 residues: Beta-defensin 131A (71 aa).

The first 22 residues, 1-22 (MRVLFFVFGVLSLMFTVPPARS), serve as a signal peptide directing secretion. Cystine bridges form between cysteine 29–cysteine 57, cysteine 37–cysteine 51, and cysteine 41–cysteine 58.

The protein belongs to the beta-defensin family.

Its subcellular location is the secreted. Its function is as follows. Has antibacterial activity. Upon stimulation with lipoteichoic acid, promotes cytokines and chemokines production and secretion. This Pan troglodytes (Chimpanzee) protein is Beta-defensin 131A.